Consider the following 396-residue polypeptide: NADH-quinone oxidoreductase subunit D (396 aa).

It belongs to the complex I 49 kDa subunit family. In terms of assembly, NDH-1 is composed of 14 different subunits. Subunits NuoB, C, D, E, F, and G constitute the peripheral sector of the complex.

It localises to the cell inner membrane. The enzyme catalyses a quinone + NADH + 5 H(+)(in) = a quinol + NAD(+) + 4 H(+)(out). Its function is as follows. NDH-1 shuttles electrons from NADH, via FMN and iron-sulfur (Fe-S) centers, to quinones in the respiratory chain. The immediate electron acceptor for the enzyme in this species is believed to be ubiquinone. Couples the redox reaction to proton translocation (for every two electrons transferred, four hydrogen ions are translocated across the cytoplasmic membrane), and thus conserves the redox energy in a proton gradient. The sequence is that of NADH-quinone oxidoreductase subunit D from Brucella canis (strain ATCC 23365 / NCTC 10854 / RM-666).